We begin with the raw amino-acid sequence, 217 residues long: Oxygen regulatory protein NreC (217 aa).

The Response regulatory domain occupies Lys2–Tyr119. Asp53 is modified (4-aspartylphosphate). Positions Thr148 to Lys213 constitute an HTH luxR-type domain. The segment at residues Asn172–Thr191 is a DNA-binding region (H-T-H motif).

Phosphorylated by NreB.

The protein localises to the cytoplasm. Its function is as follows. Member of the two-component regulatory system NreB/NreC involved in the control of dissimilatory nitrate/nitrite reduction in response to oxygen. Phosphorylated NreC binds to a GC-rich palindromic sequence at the promoters of the nitrate (narGHJI) and nitrite (nir) reductase operons, as well as the putative nitrate transporter gene narT, and activates their expression. The protein is Oxygen regulatory protein NreC (nreC) of Staphylococcus aureus (strain USA300 / TCH1516).